The sequence spans 228 residues: Woronin body membrane protein wscA (228 aa).

Helical transmembrane passes span methionine 89 to glutamine 109, leucine 130 to alanine 150, alanine 162 to alanine 182, and phenylalanine 185 to tyrosine 205.

This sequence belongs to the peroxisomal membrane protein PXMP2/4 family. As to quaternary structure, self-assembles into detergent-resistant oligomers and forms a complex with hexA assemblies.

The protein resides in the peroxisome membrane. It is found in the cell septum. Functionally, woronin sorting complex protein involved in both Woronin bodies (WB) formation and inherence. Localizes to large peroxisome membranes where it self-assembles into detergent-resistant oligomers that envelop hex-1 assemblies, producing asymmetrical nascent WBs. These structures are then delivered to the cell cortex, which permits partitioning of the nascent WB and WB inheritance. This is Woronin body membrane protein wscA from Aspergillus fumigatus (strain ATCC MYA-4609 / CBS 101355 / FGSC A1100 / Af293) (Neosartorya fumigata).